A 500-amino-acid chain; its full sequence is MAESQLNCLDEAHVNEKVTEAQAAFYYCERRRAALEALLGGGEQAYRERLKEEQLRDFLSSPERQALRAAWSPYEDAVPAANARGKSKAKAKAPAPAPAESGESLAYWPDRSDTEVPPLDLGWTDTGFYRGVSRVTLFTHPPKDEKAPHLKQVVRQMIQQAQKVIAVVMDLFTDGDIFQDIVDAACKRRVPVYIILDEAGVKYFLEMCQDLQLTDFRIRNIRVRSVTGVGFYMPMGRIKGTLSSRFLMVDGDKVATGSYRFTWSSSHVDRNLLLLLTGQNVEPFDTEFRELYAISEEVDLYRQLSLAGRVGLHYSSTVARKLINPKYALVSGCRHPPGEMMRWAARQQREAGGNPEGQEEGASGGESAWRLESFLKDLVTVEQVLPPVEPIPLGELSQKDGRMVSHMHRDLKPKSREAPSRNGMGEAARGEAAPARRFSSRLFSRRAKRPAAPNGMASSVSTETSEVEFLTGKRPNENSSADISGKTSPSSAKPSNCVIS.

Alanine 2 bears the N-acetylalanine mark. Residues 2-300 form a DUF1669 region; it reads AESQLNCLDE…LYAISEEVDL (299 aa). A Phosphoserine modification is found at serine 4. Disordered stretches follow at residues 82-109, 347-366, and 391-500; these read NARGKSKAKAKAPAPAPAESGESLAYWP, QQREAGGNPEGQEEGASGGE, and IPLG…CVIS. The segment covering 397-419 has biased composition (basic and acidic residues); sequence SQKDGRMVSHMHRDLKPKSREAP. 2 stretches are compositionally biased toward low complexity: residues 425–442 and 458–468; these read GEAARGEAAPARRFSSRL and SSVSTETSEVE. Residues 477 to 500 show a composition bias toward polar residues; the sequence is ENSSADISGKTSPSSAKPSNCVIS. The residue at position 479 (serine 479) is a Phosphoserine.

Belongs to the FAM83 family. Directly interacts (via DUF1669) with CSNK1A1 and CSNK1A1L.

The protein resides in the cell membrane. This Homo sapiens (Human) protein is Protein FAM83F (FAM83F).